The chain runs to 239 residues: Pyridoxal 5'-phosphate synthase subunit PdxS (239 aa).

Asp21 is a D-ribose 5-phosphate binding site. The active-site Schiff-base intermediate with D-ribose 5-phosphate is Lys78. Gly150 provides a ligand contact to D-ribose 5-phosphate. Arg162 is a binding site for D-glyceraldehyde 3-phosphate. D-ribose 5-phosphate is bound by residues Gly211 and 232 to 233 (GS).

The protein belongs to the PdxS/SNZ family. As to quaternary structure, in the presence of PdxT, forms a dodecamer of heterodimers.

The enzyme catalyses aldehydo-D-ribose 5-phosphate + D-glyceraldehyde 3-phosphate + L-glutamine = pyridoxal 5'-phosphate + L-glutamate + phosphate + 3 H2O + H(+). Its pathway is cofactor biosynthesis; pyridoxal 5'-phosphate biosynthesis. Functionally, catalyzes the formation of pyridoxal 5'-phosphate from ribose 5-phosphate (RBP), glyceraldehyde 3-phosphate (G3P) and ammonia. The ammonia is provided by the PdxT subunit. Can also use ribulose 5-phosphate and dihydroxyacetone phosphate as substrates, resulting from enzyme-catalyzed isomerization of RBP and G3P, respectively. The protein is Pyridoxal 5'-phosphate synthase subunit PdxS of Francisella tularensis.